A 375-amino-acid chain; its full sequence is MTTPGTFEIHATDGAARTGCLHTAHGIVRTPIFMPVGTVGSVKAIAPDDLEAIGAEIILGNTYHLYLRPGDELVARRGGLHEFNAWRKPILTDSGGFQVFSLSGLRRIAEEGVEFRSHLDGSKHLFTPEKVVSIQRNLNSDIMMVLDECVPYGADRTYTEKSVGLTTRWAKRCRDAYPKGAAGNLLFGITQGGFFKDLRTRSIGELTDIDFDGFALGGLSVGEPKAEMMDLLYHSAPLLPADKPRYLMGVGTPLDIINGIAAGVDMFDCVLPTRNARNGTLYTSLGKLNIKRREFAEDDGPLDPACSCYTCRTFSRAYLRHLYTAKELLAFRLNSIHNLTYFLDLVRGARAAIAAGRFAEYKRSFEAIYPEEVVA.

Aspartate 93 (proton acceptor) is an active-site residue. Substrate is bound by residues 93-97 (DSGGF), aspartate 147, glutamine 191, and glycine 218. An RNA binding region spans residues 249 to 255 (GVGTPLD). Aspartate 268 functions as the Nucleophile in the catalytic mechanism. Residues 273–277 (TRNAR) are RNA binding; important for wobble base 34 recognition. 4 residues coordinate Zn(2+): cysteine 306, cysteine 308, cysteine 311, and histidine 337.

The protein belongs to the queuine tRNA-ribosyltransferase family. In terms of assembly, homodimer. Within each dimer, one monomer is responsible for RNA recognition and catalysis, while the other monomer binds to the replacement base PreQ1. Zn(2+) is required as a cofactor.

It carries out the reaction 7-aminomethyl-7-carbaguanine + guanosine(34) in tRNA = 7-aminomethyl-7-carbaguanosine(34) in tRNA + guanine. The protein operates within tRNA modification; tRNA-queuosine biosynthesis. Catalyzes the base-exchange of a guanine (G) residue with the queuine precursor 7-aminomethyl-7-deazaguanine (PreQ1) at position 34 (anticodon wobble position) in tRNAs with GU(N) anticodons (tRNA-Asp, -Asn, -His and -Tyr). Catalysis occurs through a double-displacement mechanism. The nucleophile active site attacks the C1' of nucleotide 34 to detach the guanine base from the RNA, forming a covalent enzyme-RNA intermediate. The proton acceptor active site deprotonates the incoming PreQ1, allowing a nucleophilic attack on the C1' of the ribose to form the product. After dissociation, two additional enzymatic reactions on the tRNA convert PreQ1 to queuine (Q), resulting in the hypermodified nucleoside queuosine (7-(((4,5-cis-dihydroxy-2-cyclopenten-1-yl)amino)methyl)-7-deazaguanosine). The sequence is that of Queuine tRNA-ribosyltransferase from Nitratidesulfovibrio vulgaris (strain DP4) (Desulfovibrio vulgaris).